Here is a 475-residue protein sequence, read N- to C-terminus: Sulfate adenylyltransferase subunit 1 (475 aa).

In terms of domain architecture, tr-type G spans 24-240 (KSLLRFLTCG…ESAEVERELE (217 aa)). Positions 33 to 40 (GSVDDGKS) are G1. 33–40 (GSVDDGKS) is a binding site for GTP. Residues 91 to 95 (GITID) form a G2 region. The G3 stretch occupies residues 112–115 (DTPG). GTP-binding positions include 112–116 (DTPGH) and 167–170 (NKMD). A G4 region spans residues 167–170 (NKMD). Positions 204 to 206 (SAL) are G5.

This sequence belongs to the TRAFAC class translation factor GTPase superfamily. Classic translation factor GTPase family. CysN/NodQ subfamily. In terms of assembly, heterodimer composed of CysD, the smaller subunit, and CysN.

The enzyme catalyses sulfate + ATP + H(+) = adenosine 5'-phosphosulfate + diphosphate. It functions in the pathway sulfur metabolism; hydrogen sulfide biosynthesis; sulfite from sulfate: step 1/3. Functionally, with CysD forms the ATP sulfurylase (ATPS) that catalyzes the adenylation of sulfate producing adenosine 5'-phosphosulfate (APS) and diphosphate, the first enzymatic step in sulfur assimilation pathway. APS synthesis involves the formation of a high-energy phosphoric-sulfuric acid anhydride bond driven by GTP hydrolysis by CysN coupled to ATP hydrolysis by CysD. In Aeromonas hydrophila subsp. hydrophila (strain ATCC 7966 / DSM 30187 / BCRC 13018 / CCUG 14551 / JCM 1027 / KCTC 2358 / NCIMB 9240 / NCTC 8049), this protein is Sulfate adenylyltransferase subunit 1.